The following is a 204-amino-acid chain: MTAEAPPDDDIIEPEMLLRAYATGIFPMAEEADDPEVFWVRPEKRGVIPLDGFHIPRSLQKTIRQGIFEIRLDSNFAGVIEGCASGTGERARTWINEPIRRAYAKLFEIGHCHTVEAWYEGKLAGGLYGVTLGRAFFGESMFTRKRDASKVCLAYLVQHLSRQGFVLLDTQFTTPHLERFGALEVPRKEYEEMLERALEGIARF.

The protein belongs to the L/F-transferase family.

Its subcellular location is the cytoplasm. It carries out the reaction N-terminal L-lysyl-[protein] + L-leucyl-tRNA(Leu) = N-terminal L-leucyl-L-lysyl-[protein] + tRNA(Leu) + H(+). The enzyme catalyses N-terminal L-arginyl-[protein] + L-leucyl-tRNA(Leu) = N-terminal L-leucyl-L-arginyl-[protein] + tRNA(Leu) + H(+). It catalyses the reaction L-phenylalanyl-tRNA(Phe) + an N-terminal L-alpha-aminoacyl-[protein] = an N-terminal L-phenylalanyl-L-alpha-aminoacyl-[protein] + tRNA(Phe). Its function is as follows. Functions in the N-end rule pathway of protein degradation where it conjugates Leu, Phe and, less efficiently, Met from aminoacyl-tRNAs to the N-termini of proteins containing an N-terminal arginine or lysine. The sequence is that of Leucyl/phenylalanyl-tRNA--protein transferase from Brucella melitensis biotype 2 (strain ATCC 23457).